Here is a 322-residue protein sequence, read N- to C-terminus: Beta-1,3-galactosyltransferase bre-5 (322 aa).

Residues 1 to 16 (MFLCVRILKRKYHELS) are Cytoplasmic-facing. Residues 17–37 (SFQKLLIFTITIFLLWVLGVV) form a helical; Signal-anchor for type II membrane protein membrane-spanning segment. The Lumenal segment spans residues 38 to 322 (DKFRETSFGD…YEYSQLNGFE (285 aa)). N150 carries N-linked (GlcNAc...) asparagine glycosylation.

Belongs to the glycosyltransferase 31 family. In terms of tissue distribution, expressed in the gut.

It is found in the golgi apparatus membrane. Its pathway is protein modification; protein glycosylation. Transfers N-acetylgalactosamine onto mannose groups of carbohydrate substrates. Required for susceptibility to pore-forming crystal toxins in conjunction with bre-1, bre-2, bre-3, and bre-4. Involved in resistance to the nematotoxic C.cinerea galectin Cgl2. The protein is Beta-1,3-galactosyltransferase bre-5 of Caenorhabditis elegans.